The chain runs to 176 residues: Peptide deformylase 1 (176 aa).

2 residues coordinate Fe cation: cysteine 99 and histidine 141. Glutamate 142 is a catalytic residue. Histidine 145 is a Fe cation binding site.

It belongs to the polypeptide deformylase family. Fe(2+) serves as cofactor.

It carries out the reaction N-terminal N-formyl-L-methionyl-[peptide] + H2O = N-terminal L-methionyl-[peptide] + formate. Removes the formyl group from the N-terminal Met of newly synthesized proteins. Requires at least a dipeptide for an efficient rate of reaction. N-terminal L-methionine is a prerequisite for activity but the enzyme has broad specificity at other positions. This Bordetella pertussis (strain Tohama I / ATCC BAA-589 / NCTC 13251) protein is Peptide deformylase 1.